The primary structure comprises 364 residues: Alanine racemase (364 aa).

The active-site Proton acceptor; specific for D-alanine is the K34. Residue K34 is modified to N6-(pyridoxal phosphate)lysine. R129 contributes to the substrate binding site. Y259 acts as the Proton acceptor; specific for L-alanine in catalysis. Residue M307 coordinates substrate.

Belongs to the alanine racemase family. Pyridoxal 5'-phosphate serves as cofactor.

The enzyme catalyses L-alanine = D-alanine. It participates in amino-acid biosynthesis; D-alanine biosynthesis; D-alanine from L-alanine: step 1/1. Catalyzes the interconversion of L-alanine and D-alanine. May also act on other amino acids. The sequence is that of Alanine racemase (alr) from Coxiella burnetii (strain RSA 331 / Henzerling II).